The following is a 155-amino-acid chain: Probable methanogenesis regulatory protein FilR2 (155 aa).

In terms of domain architecture, Response regulatory spans 18-142 (IILLVEDNNA…DLKRTVEEIK (125 aa)). At Asp75 the chain carries 4-aspartylphosphate.

In terms of processing, phosphorylated by FilI.

Functionally, member of the two-component regulatory system FilI/FilRs, which is involved in the regulation of methanogenesis. This is Probable methanogenesis regulatory protein FilR2 from Methanothrix harundinacea (strain 6Ac) (Methanosaeta harundinacea).